The primary structure comprises 347 residues: MDASVDRITNLHFEILAKAGGHEIHQKYEAIRKLNLTGDSSKSNISVSARSAILKWADAKQGYIASQLDDRDYGDLIAKAVIFVPMSVITGGKNPKDLIPYGVVAAVLIFVPETLTLLDEIVINLMHDKKPLSSILLTKILRDMKIDVCGSNFDSFYYCPISRYNRHIIKLAGALPQMPTSVRLSVNDLARVAISEVHNQLISDKQMFFKLPTGFSPKVHCLKVLCTTEMEIFQKWVRTFMSDRPNEFIYSDQFNILSRTTYFSSDDPFSFFTLWRGWSTYKEILSQDQASSFLEAIGSGKPLRSSIATFPSMFDEGAIYIRYEWITPKDSANSKKAGSSAPSAPKM.

This sequence belongs to the phytoreovirus non-structural protein 10 family.

Suppressor of RNA-mediated gene silencing, also known as post-transcriptional gene silencing (PTGS), a mechanism of plant viral defense that limits the accumulation of viral RNAs. The sequence is that of Suppressor of RNA-mediated gene silencing from Catharanthus roseus (Madagascar periwinkle).